Here is a 523-residue protein sequence, read N- to C-terminus: REST corepressor 2 (523 aa).

The interval 1–43 is disordered; it reads MPSVMEKPSAGSGILSRSRAKTAPNGGQPHSEDDSSEEEHSHD. Residues 30 to 43 show a composition bias toward basic and acidic residues; it reads HSEDDSSEEEHSHD. A phosphoserine mark is found at S31, S35, S36, and S63. The ELM2 domain occupies 44–129; sequence SMIRVGTNYQ…KSLADLANFT (86 aa). K88 participates in a covalent cross-link: Glycyl lysine isopeptide (Lys-Gly) (interchain with G-Cter in SUMO2). The 52-residue stretch at 130-181 folds into the SANT 1 domain; it reads PFPDEWTVEDKVLFEQAFGFHGKCFQRIQQMLPDKVIPSLVKYYYSWKKTRS. Positions 185–244 are disordered; sequence VMDRQARRLGGRKDKEDSDELEEGRGAVSEGEPDTGDPKREPLPSRPLNARPGPGKKEVQ. Phosphoserine is present on S202. The stretch at 283–314 forms a coiled coil; that stretch reads TLRGLDSQLISLKRQVQSMKQTNSSLRQALEG. Positions 327–378 constitute an SANT 2 domain; it reads KFNSRWTTDEQLLAVQAIRRYGKDFGAIAEVIGNKTLTQVKTFFVSYRRRFN. The tract at residues 387 to 523 is disordered; that stretch reads EAEQDGAPAA…APLEPPAPSL (137 aa). Residues 432–459 are compositionally biased toward pro residues; the sequence is SVPPAPPPPPPPTSLSQPPPLLRPPLPT. Residues 460–482 are compositionally biased toward low complexity; the sequence is APTLLRQPPPLQQGRFLQPRLAP. Residue R479 is modified to Asymmetric dimethylarginine. Pro residues predominate over residues 504–523; it reads GPQPPPTLVGAPLEPPAPSL.

Belongs to the CoREST family. Predominantly, but not exclusively, expressed in neural tissue. Strongly expressed in neural domains of the developing brain of the developing mouse CNS.

It is found in the nucleus. In terms of biological role, may act as a component of a corepressor complex that represses transcription. In Mus musculus (Mouse), this protein is REST corepressor 2 (Rcor2).